We begin with the raw amino-acid sequence, 171 residues long: Peptide deformylase (171 aa).

Fe cation-binding residues include Cys91 and His133. Glu134 is an active-site residue. His137 lines the Fe cation pocket.

It belongs to the polypeptide deformylase family. Fe(2+) is required as a cofactor.

It catalyses the reaction N-terminal N-formyl-L-methionyl-[peptide] + H2O = N-terminal L-methionyl-[peptide] + formate. Functionally, removes the formyl group from the N-terminal Met of newly synthesized proteins. Requires at least a dipeptide for an efficient rate of reaction. N-terminal L-methionine is a prerequisite for activity but the enzyme has broad specificity at other positions. The protein is Peptide deformylase of Sodalis glossinidius (strain morsitans).